The following is a 274-amino-acid chain: Penicillin-insensitive murein endopeptidase (274 aa).

Positions 1–19 (MKKTVIALLAWFVSSASLA) are cleaved as a signal peptide. Cystine bridges form between cysteine 44-cysteine 265, cysteine 187-cysteine 235, and cysteine 216-cysteine 223. Zn(2+) is bound by residues histidine 110, histidine 113, aspartate 120, aspartate 147, histidine 150, and histidine 211. A disordered region spans residues 225-274 (DQPLPPPGDGCGAELQSWFEPPKPGTTKPEKKTPPPLPPSCQALLDEHVL).

The protein belongs to the peptidase M74 family. As to quaternary structure, dimer. The cofactor is Zn(2+).

The protein localises to the periplasm. Its function is as follows. Murein endopeptidase that cleaves the D-alanyl-meso-2,6-diamino-pimelyl amide bond that connects peptidoglycan strands. Likely plays a role in the removal of murein from the sacculus. The polypeptide is Penicillin-insensitive murein endopeptidase (Salmonella paratyphi C (strain RKS4594)).